An 841-amino-acid chain; its full sequence is DNA ligase (841 aa).

Residues 54–58, 103–104, and E143 contribute to the NAD(+) site; these read DAEYD and SL. The N6-AMP-lysine intermediate role is filled by K145. NAD(+) is bound by residues R166, E203, K321, and K345. C471, C474, C489, and C495 together coordinate Zn(2+). The tract at residues 554–575 is disordered; that stretch reads KTVAESDQMPSEGSSVGASGKH. A compositionally biased stretch (polar residues) spans 561-570; sequence QMPSEGSSVG. The region spanning 764–841 is the BRCT domain; the sequence is GINKAVAGKT…SEAELLTLLG (78 aa).

The protein belongs to the NAD-dependent DNA ligase family. LigA subfamily. It depends on Mg(2+) as a cofactor. Requires Mn(2+) as cofactor.

It carries out the reaction NAD(+) + (deoxyribonucleotide)n-3'-hydroxyl + 5'-phospho-(deoxyribonucleotide)m = (deoxyribonucleotide)n+m + AMP + beta-nicotinamide D-nucleotide.. In terms of biological role, DNA ligase that catalyzes the formation of phosphodiester linkages between 5'-phosphoryl and 3'-hydroxyl groups in double-stranded DNA using NAD as a coenzyme and as the energy source for the reaction. It is essential for DNA replication and repair of damaged DNA. The protein is DNA ligase of Neisseria meningitidis serogroup C (strain 053442).